The following is a 582-amino-acid chain: MKSIILFVLSLLLILEKQAAVMGQKCGSKGQLPSGSSQFPRGQKGQHYSGQKDEQHTKSKGSFSIQHTYHVDVNDRDRTQKSQQYDLNAQHKMTKSKQHLGGSQELLNYKQEGRDHDKSKDHFHMIVIHHKGGQAHRGTQNPSQDQGNSPSGKGISSQYSNTNKRLWVHGLTKEQASASGAQKGRTQGGSQSSYVLQTEELVANKQQRETQNSPQNKGHYQNVVEMREEHSSKLQTSLHPAYQDRLQHGPKDIFTTQDELLVYNKNQHQTKNLNQDQEHGQKTHKISYQSSRTEERQLNCGEKSVQKDVSKGGISIQTEEKIHGKSQNQVTIHSQGQEHGHKENKMSYQSSSTEERHLNCGEKGIHKGVSKGSISIQTEEQIHGKSQNQVRIPSQAQEHGHKENKMSYQSSSTEERRLNCGEKGIHKGVSKGSISIQTEEQIHGKSQNQVRIPSQAQEHGHKENKMSYQSSSTEERRLNYGGKSMQKDVSQSSTSFHTEKLVEGKSQIQTPNPNQDQWSVQNAKGKSDQSAGREQDLLSHEQKGRHQQESSEARNIVITEHEVAYDDHLTQQYNEDRNPVST.

The signal sequence occupies residues 1–23 (MKSIILFVLSLLLILEKQAAVMG). Disordered regions lie at residues 26 to 65 (CGSK…SFSI), 132 to 159 (GGQA…SSQY), 272 to 295 (NLNQ…RTEE), 318 to 358 (TEEK…ERHL), 379 to 417 (EEQI…EERR), and 439 to 582 (EEQI…PVST). 2 stretches are compositionally biased toward polar residues: residues 31-40 (QLPSGSSQFP) and 137-159 (RGTQ…SSQY). The span at 325 to 335 (KSQNQVTIHSQ) shows a compositional bias: polar residues. Residues 336-345 (GQEHGHKENK) show a composition bias toward basic and acidic residues. Polar residues-rich tracts occupy residues 379–397 (EEQI…SQAQ), 439–457 (EEQI…SQAQ), 487–496 (KDVSQSSTSF), and 506–524 (SQIQ…QNAK). Composition is skewed to basic and acidic residues over residues 525–552 (GKSD…ESSE) and 559–582 (TEHE…PVST).

Belongs to the semenogelin family. In terms of assembly, interacts with SERPINA5.

Its subcellular location is the secreted. Its function is as follows. Participates in the formation of a gel matrix (sperm coagulum) entrapping the accessory gland secretions and ejaculated spermatozoa. The protein is Semenogelin-2 (SEMG2) of Hylobates lar (Lar gibbon).